Reading from the N-terminus, the 259-residue chain is Pimeloyl-[acyl-carrier protein] methyl ester esterase (259 aa).

Residues tryptophan 18, 78 to 79 (SL), and 139 to 143 (FLALD) each bind substrate. The Nucleophile role is filled by serine 78. Active-site residues include aspartate 203 and histidine 231. A substrate-binding site is contributed by histidine 231.

Belongs to the AB hydrolase superfamily. Carboxylesterase BioH family. Monomer.

It is found in the cytoplasm. The catalysed reaction is 6-carboxyhexanoyl-[ACP] methyl ester + H2O = 6-carboxyhexanoyl-[ACP] + methanol + H(+). It participates in cofactor biosynthesis; biotin biosynthesis. The physiological role of BioH is to remove the methyl group introduced by BioC when the pimeloyl moiety is complete. It allows to synthesize pimeloyl-ACP via the fatty acid synthetic pathway through the hydrolysis of the ester bonds of pimeloyl-ACP esters. In Stenotrophomonas maltophilia (strain K279a), this protein is Pimeloyl-[acyl-carrier protein] methyl ester esterase.